The chain runs to 253 residues: Protein C1orf43 (253 aa).

Residues 11 to 31 (VNVVLVMAYGSLVFVLLFIFV) traverse the membrane as a helical segment.

The protein localises to the membrane. It is found in the golgi apparatus. The protein resides in the mitochondrion. General regulator of phagocytosis. Required to uptake Gram negative bacterium by macrophages. In Homo sapiens (Human), this protein is Protein C1orf43 (C1orf43).